The primary structure comprises 269 residues: Phycobilisome 37.5 kDa linker polypeptide, phycocyanin-associated, rod (269 aa).

The region spanning 2–177 (TSSTAARQLG…IYRGYANSDR (176 aa)) is the PBS-linker domain. One can recognise a CpcD-like domain in the interval 217-269 (GQLYRVRVIQADRGRTTQIRRSIQEYLVSYDQLSPTLQRLNQRGSRVVNISPA).

Belongs to the phycobilisome linker protein family.

It localises to the cellular thylakoid membrane. Its function is as follows. Rod linker protein, associated with phycocyanin. Linker polypeptides determine the state of aggregation and the location of the disk-shaped phycobiliprotein units within the phycobilisome and modulate their spectroscopic properties in order to mediate a directed and optimal energy transfer. The sequence is that of Phycobilisome 37.5 kDa linker polypeptide, phycocyanin-associated, rod (cpcH2) from Microchaete diplosiphon (Fremyella diplosiphon).